The chain runs to 689 residues: Glycine--tRNA ligase beta subunit (689 aa).

This sequence belongs to the class-II aminoacyl-tRNA synthetase family. Tetramer of two alpha and two beta subunits.

The protein resides in the cytoplasm. It carries out the reaction tRNA(Gly) + glycine + ATP = glycyl-tRNA(Gly) + AMP + diphosphate. The chain is Glycine--tRNA ligase beta subunit from Shewanella sediminis (strain HAW-EB3).